The chain runs to 289 residues: RING-H2 finger protein ATL30 (289 aa).

A helical membrane pass occupies residues 26–46; the sequence is VIILTVILLVVFFIGFFAIYF. The segment at 114–157 adopts an RING-type; atypical zinc-finger fold; the sequence is CAICLLEFEEEHILLRLLTTCYHVFHQECIDQWLESNKTCPVCR. Positions 181-206 are disordered; sequence HENRDQEQTSTSNEVMLSRQSSGNNE. The segment covering 188-204 has biased composition (polar residues); sequence QTSTSNEVMLSRQSSGN.

This sequence belongs to the RING-type zinc finger family. ATL subfamily.

The protein resides in the membrane. The catalysed reaction is S-ubiquitinyl-[E2 ubiquitin-conjugating enzyme]-L-cysteine + [acceptor protein]-L-lysine = [E2 ubiquitin-conjugating enzyme]-L-cysteine + N(6)-ubiquitinyl-[acceptor protein]-L-lysine.. The protein operates within protein modification; protein ubiquitination. This chain is RING-H2 finger protein ATL30 (ATL30), found in Arabidopsis thaliana (Mouse-ear cress).